Consider the following 160-residue polypeptide: Major strawberry allergen Fra a 1-D (160 aa).

This sequence belongs to the BetVI family. Monomer.

This chain is Major strawberry allergen Fra a 1-D, found in Fragaria ananassa (Strawberry).